The following is a 493-amino-acid chain: MVPVIALVGRPNVGKSTLFNRLTKSRDAIVAEYAGLTRDRQYGEARWQGRTYIVIDTGGISGDEEGIDAKMAEQSLQAIEEADAVLFLVDSRAGMTAADQMIAEHLRKRNKRSFLIANKVDTIDPDLARAEFSPLGLGDALPIAAAHGRGINHMLQEALGIFPKDNVEEEGEGEPASEEVAEGEEPTRIPGPSEKDGIKIAIIGRPNVGKSTLVNRMLGEERVIVYDQAGTTRDSIYIPFERNEEKYTLIDTAGVRRRGKIFEAVEKFSVVKTLQAIQDANVVIFVMDAREGVVEHDLNLLGFVLETGRALVIALNKWDGMEAAERDYVKTELERRLLFVDFADIHFISALHGTGVGHLYKSVQESFRSAVTRWPTSRLTSILEDAVQVHQPPMVNGRRIKLRYAHLGGANPPLIVIHGNQVDAVPKAYTRYLEKTYRRVLKLVGTPIRIEYKGGENPYEGKKNSLTARQVNKKRRLMSHHKKAEKKKKDKRR.

Residues 3-166 (PVIALVGRPN…EALGIFPKDN (164 aa)) form the EngA-type G 1 domain. GTP contacts are provided by residues 9-16 (GRPNVGKS), 56-60 (DTGGI), and 118-121 (NKVD). Acidic residues predominate over residues 167-184 (VEEEGEGEPASEEVAEGE). Residues 167 to 195 (VEEEGEGEPASEEVAEGEEPTRIPGPSEK) form a disordered region. The EngA-type G 2 domain maps to 198-371 (IKIAIIGRPN…SVQESFRSAV (174 aa)). Residues 204–211 (GRPNVGKS), 251–255 (DTAGV), and 316–319 (NKWD) each bind GTP. The KH-like domain occupies 372 to 456 (TRWPTSRLTS…PIRIEYKGGE (85 aa)). Over residues 454–463 (GGENPYEGKK) the composition is skewed to basic and acidic residues. The segment at 454–493 (GGENPYEGKKNSLTARQVNKKRRLMSHHKKAEKKKKDKRR) is disordered. Positions 471-493 (VNKKRRLMSHHKKAEKKKKDKRR) are enriched in basic residues.

Belongs to the TRAFAC class TrmE-Era-EngA-EngB-Septin-like GTPase superfamily. EngA (Der) GTPase family. Associates with the 50S ribosomal subunit.

In terms of biological role, GTPase that plays an essential role in the late steps of ribosome biogenesis. This Pseudomonas aeruginosa (strain LESB58) protein is GTPase Der.